The chain runs to 106 residues: Replication restart protein PriB (106 aa).

The 100-residue stretch at 4–103 (MNRLVLSGTV…LHAEQIELID (100 aa)) folds into the SSB domain.

Belongs to the PriB family. Homodimer. Interacts with PriA and DnaT. Component of the replication restart primosome. Primosome assembly occurs via a 'hand-off' mechanism. PriA binds to replication forks, subsequently PriB then DnaT bind; DnaT then displaces ssDNA to generate the helicase loading substrate.

Involved in the restart of stalled replication forks, which reloads the replicative helicase on sites other than the origin of replication; the PriA-PriB pathway is the major replication restart pathway. During primosome assembly it facilitates complex formation between PriA and DnaT on DNA; stabilizes PriA on DNA. Stimulates the DNA unwinding activity of PriA helicase. In Pectobacterium atrosepticum (strain SCRI 1043 / ATCC BAA-672) (Erwinia carotovora subsp. atroseptica), this protein is Replication restart protein PriB.